Reading from the N-terminus, the 278-residue chain is MAIKTYKPYTPSRRFMSVLDSKDITAKSSVKGLLTKLKATAGRNNNGRITSRHKERGAKKLYRIIDFKRNKYNIEGKVAAIEYDPYRNARIALVVYPDGDKRYILQPSGLKVGDSVIAAEGGLDIKVGFAMKLKNIPIGTVVHNIEMHPGAGGQLARSAGMSAQIMGRENKYTILRMPSSEMRYILSECMASVGVVGNEDFINVSIGKAGRNRHRGIRPQTRGSAMNPVDHPHGGGEGKTGTSGHPVSPWGTPAKGYKTRKKKASDKLIISRKKHKKG.

The interval 212 to 278 (NRHRGIRPQT…IISRKKHKKG (67 aa)) is disordered. Residues 257-278 (YKTRKKKASDKLIISRKKHKKG) are compositionally biased toward basic residues.

This sequence belongs to the universal ribosomal protein uL2 family. As to quaternary structure, part of the 50S ribosomal subunit. Forms a bridge to the 30S subunit in the 70S ribosome.

In terms of biological role, one of the primary rRNA binding proteins. Required for association of the 30S and 50S subunits to form the 70S ribosome, for tRNA binding and peptide bond formation. It has been suggested to have peptidyltransferase activity; this is somewhat controversial. Makes several contacts with the 16S rRNA in the 70S ribosome. This is Large ribosomal subunit protein uL2 from Helicobacter pylori (strain Shi470).